Reading from the N-terminus, the 361-residue chain is Fructose-bisphosphate aldolase (361 aa).

Thr2 is subject to N-acetylthreonine. Residues Arg56 and Lys147 each contribute to the substrate site. Glu188 functions as the Proton acceptor in the catalytic mechanism. Lys230 serves as the catalytic Schiff-base intermediate with dihydroxyacetone-P.

Belongs to the class I fructose-bisphosphate aldolase family. In terms of assembly, homotetramer. As to expression, mainly expressed in the heads and partly in the thoraxes of adult flies. In terms of tissue distribution, expressed in all adult tissues. The Alpha-beta mRNA shows strong expression in the abdomens of adults. Mainly expressed in adult abdominal regions and is also expressed in lesser amounts in other parts of the body. The Beta-gamma mRNA is expressed in adult heads.

The enzyme catalyses beta-D-fructose 1,6-bisphosphate = D-glyceraldehyde 3-phosphate + dihydroxyacetone phosphate. It functions in the pathway carbohydrate degradation; glycolysis; D-glyceraldehyde 3-phosphate and glycerone phosphate from D-glucose: step 4/4. In terms of biological role, enzyme of the glycolytic pathway. Glycolysis is essential in glial cells but not in neurons; neurons rely on the citric acid cycle for their energy needs, and on lactate and alanine secreted into the hemolymph by glial cells to fuel it. May take part in developmental stage-specific or tissue -specific sugar-phosphate metabolisms. Protein acts on two substrates fructose 1,6-bisphosphate and fructose 1-phosphate (like other class I aldolases). The chain is Fructose-bisphosphate aldolase from Drosophila melanogaster (Fruit fly).